Consider the following 127-residue polypeptide: Protein ApaG (127 aa).

Residues 3–127 enclose the ApaG domain; sequence ANSPPTIKCN…FRLAIPNILH (125 aa).

This Photobacterium profundum (strain SS9) protein is Protein ApaG.